The primary structure comprises 218 residues: MSFFDSYRKKMQMPSKEEVLPGRVQPIPTAAAHFVSGHPLKGPWPDGMKQVLFGMGCFWGAERLFWQVPGVYVTAVGYAGGITPNPTYEETCTGLTGHAEVVLVVYDPKVVTLNELLALFWEEHDPTQGMRQGNDIGTTYRSVIYTFNAVDRAVAEKSRDAYSQALASRGLGPVTTQITEAPDFYYAEDYHQQYLAKNPDGYCGLRGTGVSCPIPLAH.

C57 is an active-site residue.

It belongs to the MsrA Met sulfoxide reductase family.

It carries out the reaction L-methionyl-[protein] + [thioredoxin]-disulfide + H2O = L-methionyl-(S)-S-oxide-[protein] + [thioredoxin]-dithiol. It catalyses the reaction [thioredoxin]-disulfide + L-methionine + H2O = L-methionine (S)-S-oxide + [thioredoxin]-dithiol. Functionally, has an important function as a repair enzyme for proteins that have been inactivated by oxidation. Catalyzes the reversible oxidation-reduction of methionine sulfoxide in proteins to methionine. In Brucella melitensis biotype 2 (strain ATCC 23457), this protein is Peptide methionine sulfoxide reductase MsrA.